The following is an 831-amino-acid chain: Translation initiation factor IF-2 (831 aa).

A tr-type G domain is found at 329 to 499; the sequence is TRAPVVTVMG…LLIAEMQDLK (171 aa). The tract at residues 338 to 345 is G1; the sequence is GHVDHGKT. Residue 338 to 345 coordinates GTP; sequence GHVDHGKT. Residues 363-367 are G2; the sequence is GITQH. A G3 region spans residues 385 to 388; that stretch reads DTPG. GTP contacts are provided by residues 385 to 389 and 439 to 442; these read DTPGH and NKID. The tract at residues 439 to 442 is G4; it reads NKID. The G5 stretch occupies residues 475–477; that stretch reads SAL.

The protein belongs to the TRAFAC class translation factor GTPase superfamily. Classic translation factor GTPase family. IF-2 subfamily.

Its subcellular location is the cytoplasm. Functionally, one of the essential components for the initiation of protein synthesis. Protects formylmethionyl-tRNA from spontaneous hydrolysis and promotes its binding to the 30S ribosomal subunits. Also involved in the hydrolysis of GTP during the formation of the 70S ribosomal complex. This Rickettsia massiliae (strain Mtu5) protein is Translation initiation factor IF-2.